The chain runs to 509 residues: UDP-N-acetylmuramyl-tripeptide synthetase (509 aa).

Residue Ser30 participates in UDP-N-acetyl-alpha-D-muramoyl-L-alanyl-D-glutamate binding. Residue Gly111–Thr117 participates in ATP binding. Residues Ser155 to Thr156, Thr182, and Arg192 contribute to the UDP-N-acetyl-alpha-D-muramoyl-L-alanyl-D-glutamate site. Residue Lys224 is modified to N6-carboxylysine.

Belongs to the MurCDEF family. MurE subfamily. Carboxylation is probably crucial for Mg(2+) binding and, consequently, for the gamma-phosphate positioning of ATP.

It is found in the cytoplasm. It participates in cell wall biogenesis; peptidoglycan biosynthesis. Its function is as follows. Catalyzes the addition of an amino acid to the nucleotide precursor UDP-N-acetylmuramoyl-L-alanyl-D-glutamate (UMAG) in the biosynthesis of bacterial cell-wall peptidoglycan. The protein is UDP-N-acetylmuramyl-tripeptide synthetase of Roseiflexus sp. (strain RS-1).